A 366-amino-acid polypeptide reads, in one-letter code: Box C/D snoRNA protein 1 (366 aa).

Zn(2+)-binding residues include cysteine 5, cysteine 8, cysteine 17, cysteine 20, cysteine 25, cysteine 29, histidine 33, and cysteine 39. An HIT-type zinc finger spans residues 5–39; it reads CGVCGIKEFKYKCPRCLVQTCSLECSKKHKTRDNC. Positions 318 to 366 are disordered; the sequence is DNAREEEDAEEDSQPTEEPVQKETQDASDSDSDSDDDYNPGLSMDFLTA. Composition is skewed to acidic residues over residues 321–332 and 343–355; these read REEEDAEEDSQP and DASDSDSDSDDDY. Residue serine 330 is modified to Phosphoserine.

It belongs to the BCD1 family.

The protein localises to the nucleus. Required for box C/D snoRNAs accumulation involved in snoRNA processing, snoRNA transport to the nucleolus and ribosome biogenesis. In Saccharomyces cerevisiae (strain ATCC 204508 / S288c) (Baker's yeast), this protein is Box C/D snoRNA protein 1 (BCD1).